The chain runs to 374 residues: tRNA-specific 2-thiouridylase MnmA (374 aa).

Residues 17–24 and M43 each bind ATP; that span reads GMSGGVDS. Residues 103 to 105 are interaction with target base in tRNA; the sequence is NPD. The active-site Nucleophile is C108. C108 and C204 are oxidised to a cystine. G132 contacts ATP. The segment at 154–156 is interaction with tRNA; the sequence is KDQ. The active-site Cysteine persulfide intermediate is the C204. Residues 316-317 form an interaction with tRNA region; the sequence is RY.

This sequence belongs to the MnmA/TRMU family.

Its subcellular location is the cytoplasm. It carries out the reaction S-sulfanyl-L-cysteinyl-[protein] + uridine(34) in tRNA + AH2 + ATP = 2-thiouridine(34) in tRNA + L-cysteinyl-[protein] + A + AMP + diphosphate + H(+). In terms of biological role, catalyzes the 2-thiolation of uridine at the wobble position (U34) of tRNA, leading to the formation of s(2)U34. In Pseudomonas entomophila (strain L48), this protein is tRNA-specific 2-thiouridylase MnmA.